A 61-amino-acid polypeptide reads, in one-letter code: Small ribosomal subunit protein uS14 (61 aa).

Zn(2+)-binding residues include C24, C27, C40, and C43.

It belongs to the universal ribosomal protein uS14 family. Zinc-binding uS14 subfamily. Part of the 30S ribosomal subunit. Contacts proteins S3 and S10. Zn(2+) is required as a cofactor.

In terms of biological role, binds 16S rRNA, required for the assembly of 30S particles and may also be responsible for determining the conformation of the 16S rRNA at the A site. This is Small ribosomal subunit protein uS14 from Geobacillus stearothermophilus (Bacillus stearothermophilus).